The following is a 141-amino-acid chain: Large ribosomal subunit protein uL11 (141 aa).

This sequence belongs to the universal ribosomal protein uL11 family. As to quaternary structure, part of the ribosomal stalk of the 50S ribosomal subunit. Interacts with L10 and the large rRNA to form the base of the stalk. L10 forms an elongated spine to which L12 dimers bind in a sequential fashion forming a multimeric L10(L12)X complex. Post-translationally, one or more lysine residues are methylated.

Its function is as follows. Forms part of the ribosomal stalk which helps the ribosome interact with GTP-bound translation factors. This is Large ribosomal subunit protein uL11 from Nitratiruptor sp. (strain SB155-2).